Reading from the N-terminus, the 319-residue chain is Large ribosomal subunit protein uL10 (319 aa).

The segment at 286-319 (AGDSGASAAPKEEEKAAEPEEESDEEMGFSLFDD) is disordered. Residues 304 to 319 (PEEESDEEMGFSLFDD) are compositionally biased toward acidic residues.

This sequence belongs to the universal ribosomal protein uL10 family. P0 forms a pentameric complex by interaction with dimers of P1 and P2. In terms of processing, phosphorylated.

Its function is as follows. Ribosomal protein P0 is the functional equivalent of E.coli protein L10. The polypeptide is Large ribosomal subunit protein uL10 (RP-P0) (Zea mays (Maize)).